Consider the following 271-residue polypeptide: Aspartate/glutamate leucyltransferase (271 aa).

It belongs to the R-transferase family. Bpt subfamily.

The protein localises to the cytoplasm. It catalyses the reaction N-terminal L-glutamyl-[protein] + L-leucyl-tRNA(Leu) = N-terminal L-leucyl-L-glutamyl-[protein] + tRNA(Leu) + H(+). The enzyme catalyses N-terminal L-aspartyl-[protein] + L-leucyl-tRNA(Leu) = N-terminal L-leucyl-L-aspartyl-[protein] + tRNA(Leu) + H(+). Its function is as follows. Functions in the N-end rule pathway of protein degradation where it conjugates Leu from its aminoacyl-tRNA to the N-termini of proteins containing an N-terminal aspartate or glutamate. The chain is Aspartate/glutamate leucyltransferase from Acinetobacter baumannii (strain SDF).